The primary structure comprises 158 residues: Small ribosomal subunit protein bS6 (158 aa).

Residues 98-158 (EAPSAPLARR…DRDEDQNEEN (61 aa)) form a disordered region. 2 stretches are compositionally biased toward basic and acidic residues: residues 106-117 (RRGEDRDRDRGF) and 127-150 (DSGR…RSDR).

The protein belongs to the bacterial ribosomal protein bS6 family.

In terms of biological role, binds together with bS18 to 16S ribosomal RNA. The protein is Small ribosomal subunit protein bS6 of Acidiphilium cryptum (strain JF-5).